A 150-amino-acid chain; its full sequence is Macrodomain Ter protein (150 aa).

The protein belongs to the MatP family. Homodimer.

It localises to the cytoplasm. Required for spatial organization of the terminus region of the chromosome (Ter macrodomain) during the cell cycle. Prevents early segregation of duplicated Ter macrodomains during cell division. Binds specifically to matS, which is a 13 bp signature motif repeated within the Ter macrodomain. The polypeptide is Macrodomain Ter protein (Escherichia coli O6:K15:H31 (strain 536 / UPEC)).